The following is a 193-amino-acid chain: Apoptosis-associated speck-like protein containing a CARD (193 aa).

Residues Met-1 to Glu-91 form the Pyrin domain. Residues Lys-55 and Lys-172 each participate in a glycyl lysine isopeptide (Lys-Gly) (interchain with G-Cter in ubiquitin) cross-link. One can recognise a CARD domain in the interval Ser-105–Ser-193. Ser-193 is subject to Phosphoserine.

As to quaternary structure, self-associates; enforced oligomerization induces apoptosis, NF-kappa-B regulation and interleukin-1 beta secretion. Homooligomers can form disk-like particles of approximately 12 nm diameter and approximately 1 nm height. Component of several inflammasomes containing one pattern recognition receptor/sensor, such as NLRP2, NLRP3, NLRP6, NLRC4, AIM2, MEFV or NOD2, and probably NLRC4 or NLRP12. Major component of the ASC pyroptosome, a 1-2 um supramolecular assembly (one per macrophage cell) which consists of oligomerized PYCARD dimers and CASP1. Interacts with CASP1 (precursor form); the interaction induces activation of CASP1 leading to the processing of interleukin-1 beta; PYCARD competes with RIPK2 for binding to CASP1. Interacts with NLRP3; the interaction requires the homooligomerization of NLRP3. Interacts with NLRP2, NLRC4, MEFV, CARD16, AIM2, NOD2, RIGI, RIPK2, PYDC1, PYDC2, NLRP10, CHUK, IKBKB and BAX. Interacts with CASP8. Component of the AIM2 PANoptosome complex, a multiprotein complex that drives inflammatory cell death (PANoptosis). Phosphorylated. Post-translationally, 'Lys-63'-linked polyubiquitination by TRAF3 is critical for speck formation and inflammasome activation. 'Lys-63'-linked deubiquitinated by USP50; a crucial step for NLRP3-mediated inflammasome activation. 'Lys-63'-linked polyubiquitination by PELI1 is also critical for speck formation and inflammasome activation. Deubiquitinated by USP3 that cleaves 'Lys-48'-linked ubiquitin chains and strengthens its stability by blocking proteasomal degradation. As to expression, expressed in small intestine, colon, thymus, spleen, brain, heart, skeletal muscle, kidney, lung and liver.

The protein resides in the cytoplasm. Its subcellular location is the inflammasome. The protein localises to the endoplasmic reticulum. It localises to the mitochondrion. It is found in the nucleus. In terms of biological role, functions as a key mediator in apoptosis and inflammation. Promotes caspase-mediated apoptosis involving predominantly caspase-8 and also caspase-9 in a probable cell type-specific manner. Involved in activation of the mitochondrial apoptotic pathway, promotes caspase-8-dependent proteolytic maturation of BID independently of FADD in certain cell types and also mediates mitochondrial translocation of BAX and activates BAX-dependent apoptosis coupled to activation of caspase-9, -2 and -3. Involved in innate immune response by acting as an integral adapter in the assembly of various inflammasomes (NLRP2, NLRP3, NLRP6 and AIM2) which recruit and activate caspase-1 leading to processing and secretion of pro-inflammatory cytokines. Caspase-1-dependent inflammation leads to macrophage pyroptosis, a form of cell death. The function as activating adapter in different types of inflammasomes is mediated by the pyrin and CARD domains and their homotypic interactions. Clustered PYCARD nucleates the formation of caspase-1 filaments through the interaction of their respective CARD domains, acting as a platform for of caspase-1 polymerization. In the NLRC4 inflammasomes seems not be required but facilitates the processing of procaspase-1. In cooperation with NOD2 involved in an inflammasome activated by bacterial muramyl dipeptide leading to caspase-1 activation. May be involved in RIGI-triggered pro-inflammatory responses and inflammasome activation. In collaboration with AIM2 which detects cytosolic double-stranded DNA may also be involved in a caspase-1-independent cell death that involves caspase-8. In adaptive immunity may be involved in maturation of dendritic cells to stimulate T-cell immunity and in cytoskeletal rearrangements coupled to chemotaxis and antigen uptake may be involved in post-transcriptional regulation of the guanine nucleotide exchange factor DOCK2; the latter function is proposed to involve the nuclear form. Also involved in transcriptional activation of cytokines and chemokines independent of the inflammasome; this function may involve AP-1, NF-kappa-B, MAPK and caspase-8 signaling pathways. For regulation of NF-kappa-B activating and inhibiting functions have been reported. Modulates NF-kappa-B induction at the level of the IKK complex by inhibiting kinase activity of CHUK and IKBK. Proposed to compete with RIPK2 for association with CASP1 thereby down-regulating CASP1-mediated RIPK2-dependent NF-kappa-B activation and activating interleukin-1 beta processing. Modulates host resistance to DNA virus infection, probably by inducing the cleavage of and inactivating CGAS in presence of cytoplasmic double-stranded DNA. The polypeptide is Apoptosis-associated speck-like protein containing a CARD (Pycard) (Mus musculus (Mouse)).